The following is a 581-amino-acid chain: MAGIQQQQLVNDTLPASWNGSSNRIASVNVEEGQPQPWVDDLDLEDPNHQKPGWRKFLSYVGPGFLVSLAYLDPGNLETDLQAGANHRYELLWVILIGLIFALIIQSLAANLGVSTGKTFKHHTSWILGKHLSELCKAEYPKYVKYCLWLLAEIAVIAADIPEGIISSLLYYFKLILDTYLLIGTAFALNILFHIPVWVGVLCTGCSTLLLLGLQKYGVRKLELLIAVLVFVMAACFFGEMSYVKPSATDVLKGMFIPKLSGQGATGDAIALLGALIMPHNLFLHSALVLSRKMPNSVRGINDACRYFLIESGFALFIAFLINLAVISVSGTVCSAQNLSSENADRCGDLTLNSASFLLQNVLGKSSSKIYAIALLASGQSSTITGTYAGQYIMQGFLELKMRKWIRNLVTRCIAIAPSLVVSIIGGSSGAGRLIIIASVLQMILSFELPFALIPLLKFSSSTTKMGPHKNSIYIIVISWILGLGIIGVNIYYLSTGFVGWLIDNNLPKVGNVFIGIIVFPLMAIYILAVIYLTFRKDSVVTFLGPNKNDPQQQANMENGLGPEMERVPYREDLADIPLPE.

Residues Asn-11 and Asn-19 are each glycosylated (N-linked (GlcNAc...) asparagine). Transmembrane regions (helical) follow at residues 57–77 (FLSYVGPGFLVSLAYLDPGNL), 90–110 (ELLWVILIGLIFALIIQSLAA), 146–166 (YCLWLLAEIAVIAADIPEGII), 181–201 (LLIGTAFALNILFHIPVWVGV), 224–244 (LLIAVLVFVMAACFFGEMSYV), 270–290 (IALLGALIMPHNLFLHSALVL), and 307–327 (YFLIESGFALFIAFLINLAVI). The N-linked (GlcNAc...) asparagine glycan is linked to Asn-338. The next 5 helical transmembrane spans lie at 370 to 390 (IYAIALLASGQSSTITGTYAG), 409 to 429 (LVTRCIAIAPSLVVSIIGGSS), 434 to 454 (LIIIASVLQMILSFELPFALI), 473 to 493 (IYIIVISWILGLGIIGVNIYY), and 513 to 533 (VFIGIIVFPLMAIYILAVIYL). Residues 551–581 (PQQQANMENGLGPEMERVPYREDLADIPLPE) form a disordered region. Over residues 564–574 (EMERVPYREDL) the composition is skewed to basic and acidic residues.

This sequence belongs to the NRAMP (TC 2.A.55) family.

It is found in the membrane. In terms of biological role, probable divalent metal transporter. The chain is Metal transporter Nramp7.1 from Populus trichocarpa (Western balsam poplar).